The primary structure comprises 638 residues: Threonine--tRNA ligase (638 aa).

A TGS domain is found at 1-61; it reads MPVVTLPDGS…EADAEVALVT (61 aa). Residues 242–533 form a catalytic region; sequence DHRKLGKALD…LTEHYAGQYP (292 aa). Residues cysteine 333, histidine 384, and histidine 510 each contribute to the Zn(2+) site.

It belongs to the class-II aminoacyl-tRNA synthetase family. In terms of assembly, homodimer. The cofactor is Zn(2+).

The protein resides in the cytoplasm. It carries out the reaction tRNA(Thr) + L-threonine + ATP = L-threonyl-tRNA(Thr) + AMP + diphosphate + H(+). Its function is as follows. Catalyzes the attachment of threonine to tRNA(Thr) in a two-step reaction: L-threonine is first activated by ATP to form Thr-AMP and then transferred to the acceptor end of tRNA(Thr). Also edits incorrectly charged L-seryl-tRNA(Thr). This Methylococcus capsulatus (strain ATCC 33009 / NCIMB 11132 / Bath) protein is Threonine--tRNA ligase.